A 1426-amino-acid polypeptide reads, in one-letter code: A disintegrin and metalloproteinase with thrombospondin motifs 13 (1426 aa).

An N-terminal signal peptide occupies residues 1–33 (MSQLCLWLTCQPCYAVSVRGILTGAIFILGCWG). A propeptide spanning residues 34–76 (LSDFQKSLLQDLEPKDVSSYFGHHAAPFTGHPPSHLQRLRRRR) is cleaved from the precursor. The Peptidase M12B domain occupies 74–291 (RRRTLEDILH…GQMHCFQDPP (218 aa)). Glu-85 is a Ca(2+) binding site. N-linked (GlcNAc...) asparagine glycans are attached at residues Asn-144 and Asn-148. Cystine bridges form between Cys-157/Cys-210, Cys-204/Cys-286, and Cys-246/Cys-270. Residues Asp-175, Asp-184, Glu-186, Asp-189, and Glu-214 each contribute to the Ca(2+) site. Residue His-226 participates in Zn(2+) binding. Residue Glu-227 is part of the active site. Zn(2+) is bound by residues His-230 and His-236. 2 residues coordinate Ca(2+): Thr-281 and Asp-289. In terms of domain architecture, Disintegrin spans 295–388 (SGLTRHQLMA…LAELAPVAAV (94 aa)). 11 disulfide bridges follow: Cys-316-Cys-342, Cys-327-Cys-352, Cys-337-Cys-371, Cys-365-Cys-376, Cys-401-Cys-438, Cys-405-Cys-443, Cys-416-Cys-428, Cys-488-Cys-527, Cys-513-Cys-532, Cys-537-Cys-553, and Cys-550-Cys-560. The region spanning 389-444 (HGHWSSWGPHSPCSRSCGGGVITRRRWCNNPRPAFGGRACVGEDLQAKMCNTQACE) is the TSP type-1 1 domain. Residues 445–561 (KTQLEFMSEQ…VCGGDNSTCS (117 aa)) form a cysteine-rich region. The Cell attachment site motif lies at 503–505 (RGD). Residues 556–685 (DNSTCSSRNG…PDITFSYFQL (130 aa)) form a spacer region. N-linked (GlcNAc...) asparagine glycosylation is found at Asn-557, Asn-564, Asn-584, and Asn-619. TSP type-1 domains follow at residues 687–746 (QQAA…VSAP), 747–810 (CSPY…QPCP), 808–871 (PCPT…SLCS), 904–957 (WTPL…RARP), 958–1019 (CPAR…EPCP), 1020–1078 (ARWK…IADC), and 1079–1137 (AFRW…GPCA). Residues Ser-703 and Ser-762 are each glycosylated (O-linked (Fuc...) serine). A glycan (N-linked (GlcNAc...) asparagine) is linked at Asn-834. An O-linked (Fuc...) serine glycan is attached at Ser-914. The O-linked (Fuc...) threonine glycan is linked to Thr-973. An O-linked (Fuc...) serine glycan is attached at Ser-1033. An N-linked (GlcNAc...) asparagine glycan is attached at Asn-1057. A glycan (O-linked (Fuc...) serine) is linked at Ser-1093. CUB domains are found at residues 1195–1302 (ACGR…FYKE) and 1293–1426 (QPAP…LALS).

The cofactor is Zn(2+). Ca(2+) is required as a cofactor. The precursor is processed by a furin endopeptidase which cleaves off the pro-domain. Post-translationally, O-glycosylated. O-fucosylated by POFUT2 on a serine or a threonine residue found within the consensus sequence C1-X(2)-(S/T)-C2-G of the TSP type-1 repeat domains where C1 and C2 are the first and second cysteine residue of the repeat, respectively. Fucosylated repeats can then be further glycosylated by the addition of a beta-1,3-glucose residue by the glucosyltransferase, B3GALTL. Fucosylation mediates the efficient secretion of ADAMTS13. May also be C-glycosylated on tryptophan residues within the consensus sequence W-X-X-W of the TPRs, and also N-glycosylated. These other glycosylations can also facilitate secretion. As to expression, plasma. Expression is consistently high in liver, medium in lung and spleen, low in skeletal muscle and undetectable in heart, brain, kidney and testis.

The protein resides in the secreted. It carries out the reaction The enzyme cleaves the von Willebrand factor at bond 842-Tyr-|-Met-843 within the A2 domain.. Zinc and calcium ions cooperatively modulate enzyme activity. The cleavage of the pro-domain is not required for protease activity. Dependence on calcium for proteolytic activity is mediated by the high affinity site. Its function is as follows. Cleaves the vWF multimers in plasma into smaller forms thereby controlling vWF-mediated platelet thrombus formation. This is A disintegrin and metalloproteinase with thrombospondin motifs 13 (Adamts13) from Mus musculus (Mouse).